A 119-amino-acid chain; its full sequence is Ig heavy chain V region X44 (119 aa).

The region spanning 1-117 (EVKLLESGGG…WGQGTLVTVS (117 aa)) is the Ig-like domain.

The sequence is that of Ig heavy chain V region X44 from Mus musculus (Mouse).